We begin with the raw amino-acid sequence, 146 residues long: Linear conopeptide (146 aa).

An N-terminal signal peptide occupies residues 1–19 (MLRLIIAAAVLVSACLAYP). Residues 20-34 (QRREGAPADAANLQS) constitute a propeptide that is removed on maturation. Position 40 is a methionine sulfoxide; partial; in Cn2 (M40). 2 propeptides span residues 58–80 (FLPF…LEKR) and 104–146 (FLHN…DKEQ). Residues 107–146 (NEKGDKHPFANVDSADTDLGQFEPSAENKNGEFRFFDKEQ) form a disordered region. The segment covering 135–146 (KNGEFRFFDKEQ) has biased composition (basic and acidic residues).

Expressed by the venom duct.

Its subcellular location is the secreted. The sequence is that of Linear conopeptide from Conus consors (Singed cone).